Here is a 72-residue protein sequence, read N- to C-terminus: Small ribosomal subunit protein eS31 (72 aa).

Zn(2+) is bound by residues Cys-32, Cys-35, Cys-51, and Cys-54. The C4-type zinc finger occupies 32–54; sequence CPRCGSVMAYHKEPVPRWHCGKC.

This sequence belongs to the eukaryotic ribosomal protein eS31 family. Part of the 30S ribosomal subunit. Requires Zn(2+) as cofactor.

The polypeptide is Small ribosomal subunit protein eS31 (Caldivirga maquilingensis (strain ATCC 700844 / DSM 13496 / JCM 10307 / IC-167)).